The primary structure comprises 206 residues: Ectodysplasin-A receptor-associated adapter protein (206 aa).

Disordered stretches follow at residues 1 to 36 (MRPLQSYKAFEDHMAQEPVEDTDPSTLSFNTSDKYP) and 52 to 77 (TLNCPPNSDMKNQGEENGFPDSTGDP). Composition is skewed to polar residues over residues 24–33 (PSTLSFNTSD) and 52–62 (TLNCPPNSDMK). A Death domain is found at 114 to 190 (DVIRIKLDPC…DVEKVLRRWV (77 aa)).

In terms of assembly, self-associates and binds to EDAR, TRAF1, TRAF2 and TRAF3.

Its subcellular location is the cytoplasm. Its function is as follows. Adapter protein that interacts with EDAR DEATH domain and couples the receptor to EDA signaling pathway during morphogenesis of ectodermal organs. Mediates the activation of NF-kappa-B. This Macaca fascicularis (Crab-eating macaque) protein is Ectodysplasin-A receptor-associated adapter protein (EDARADD).